We begin with the raw amino-acid sequence, 996 residues long: KK-1 biosynthesis cluster protein D (996 aa).

Disordered stretches follow at residues 307 to 333 (HDTDGEKASTAPIRSNKLSQSKQPELD), 425 to 449 (EQDNQTNEEGTGEVQSQRDRRARDL), 489 to 556 (AGVA…ALRA), and 571 to 602 (STHSIHQRASVNTTAPTVARSSDSDDSDSLHS). Polar residues-rich tracts occupy residues 318-329 (PIRSNKLSQSKQ) and 428-439 (NQTNEEGTGEVQ). Composition is skewed to basic and acidic residues over residues 440–449 (SQRDRRARDL) and 500–527 (RAAEEGGCREKEAENAKTDEEQVQDKAA). Polar residues predominate over residues 572–590 (THSIHQRASVNTTAPTVAR).

It functions in the pathway secondary metabolite biosynthesis. Functionally, part of the gene cluster that mediates the biosynthesis of KK-1, a novel cyclic depsipeptide with 10 residues which is a promising active compound with high activity against many plant pathogens, especially Botrytis cinerea. The role of kk1D in KK-1 biosynthesis has still to be determined. The nonribosomal peptide synthetase (NRPS) kk1B catalyzes the elongation and cyclization of the decapeptide chain composed of 1 D-lactic acid residue (D-Lac), 1 pipecolic acid residue (Pip), 1 aspartic acid residue (Asp), 1 isoleucine residue (Ile), 1 glycine residue (Gly), 1 tyrosine residue (Tyr) and 4 valine residues (Val). The Asp, Ile and 3 Val residues are N-methylated by the 5 methyltransferase domains from the NRPS (found in modules 3, 5, 6, 7 and 9), whereas the Tyr residue is O-methylated by the cluster encoded O-methyltransferase kk1A. The thioesterase kk1J is likely to be involved in the corrective mechanism of peptide chain synthesis. The D-lactate dehydrogenase kk1H is involved in the synthesis of D-lactic acid from pyruvic acid, which is recognized by the A domain of the first kk1B module. The pyrroline-5-carboxylate reductase kk1I is involved in the synthesis of the L-pipecolic acid residue of KK-1 from delta-1-pyrroline-5-carboxylate (P5C), a metabolic intermediate of lysine. It is still unclear how kk1C and kk1D are involved in the production of KK-1. The protein is KK-1 biosynthesis cluster protein D of Curvularia clavata.